The sequence spans 303 residues: MATH domain and coiled-coil domain-containing protein At3g58250 (303 aa).

Residues lysine 8–isoleucine 135 enclose the MATH domain. Residues lysine 231–alanine 287 adopt a coiled-coil conformation.

The protein is MATH domain and coiled-coil domain-containing protein At3g58250 of Arabidopsis thaliana (Mouse-ear cress).